The following is a 521-amino-acid chain: Amidase (521 aa).

Residues lysine 96 and serine 171 each act as charge relay system in the active site. A disordered region spans residues 155 to 174; it reads SGPVRNPWDRQREAGGSSGG. Serine 195 serves as the catalytic Acyl-ester intermediate.

The protein belongs to the amidase family. In terms of assembly, homodimer.

The catalysed reaction is a monocarboxylic acid amide + H2O = a monocarboxylate + NH4(+). Functionally, hydrolyzes propionamides efficiently, and also at a lower efficiency, acetamide, acrylamide and indoleacetamide. This enzyme seems to be stereospecific and can lead to the production of a single enantiomer. This Rhodococcus erythropolis (Arthrobacter picolinophilus) protein is Amidase (amdA).